Reading from the N-terminus, the 228-residue chain is Cytidylate kinase (228 aa).

An ATP-binding site is contributed by 12-20 (GPSGSGKGT).

The protein belongs to the cytidylate kinase family. Type 1 subfamily.

The protein localises to the cytoplasm. It carries out the reaction CMP + ATP = CDP + ADP. It catalyses the reaction dCMP + ATP = dCDP + ADP. This Pseudomonas putida (strain ATCC 47054 / DSM 6125 / CFBP 8728 / NCIMB 11950 / KT2440) protein is Cytidylate kinase.